A 317-amino-acid polypeptide reads, in one-letter code: NAD-dependent protein deacetylase Sirt6 (317 aa).

The Deacetylase sirtuin-type domain maps to D27 to E273. The NAD(+) site is built by A53, T57, F64, R65, W71, Q113, and H133. Catalysis depends on H133, which acts as the Proton acceptor. 4 residues coordinate Zn(2+): C141, C144, C166, and C177. The NAD(+) site is built by G215, N241, Q243, and V259.

Belongs to the sirtuin family. Class IV subfamily. Zn(2+) serves as cofactor. As to expression, widely expressed.

The protein localises to the nucleus. It localises to the chromosome. It carries out the reaction N(6)-acetyl-L-lysyl-[protein] + NAD(+) + H2O = 2''-O-acetyl-ADP-D-ribose + nicotinamide + L-lysyl-[protein]. Functionally, NAD-dependent histone deacylase that acts as a regulator of life span. The chain is NAD-dependent protein deacetylase Sirt6 from Drosophila melanogaster (Fruit fly).